A 362-amino-acid chain; its full sequence is Probable protein phosphatase 2C 24 (362 aa).

In terms of domain architecture, PPM-type phosphatase spans R77–L360. Mn(2+) contacts are provided by D117, G118, D295, and D351.

The protein belongs to the PP2C family. Requires Mg(2+) as cofactor. Mn(2+) serves as cofactor.

It catalyses the reaction O-phospho-L-seryl-[protein] + H2O = L-seryl-[protein] + phosphate. The catalysed reaction is O-phospho-L-threonyl-[protein] + H2O = L-threonyl-[protein] + phosphate. In Arabidopsis thaliana (Mouse-ear cress), this protein is Probable protein phosphatase 2C 24.